Consider the following 568-residue polypeptide: Pentatricopeptide repeat-containing protein At1g73400, mitochondrial (568 aa).

Residues 1–55 (MMRRLVSYFVRSRFSLHLSTTPPQRSALFSHILSSHLDSIQINKKISSFSVHRFC) constitute a mitochondrion transit peptide. 8 PPR repeats span residues 233–263 (EINAFNMLLDALCKCGLVKEGEALLRRMRHR), 267–301 (DANTFNVLFFGWCRVRDPKKAMKLLEEMIEAGHKP), 302–336 (ENFTYCAAIDTFCQAGMVDEAADLFDFMITKGSAV), 340–374 (TAKTFALMIVALAKNDKAEECFELIGRMISTGCLP), 375–409 (DVSTYKDVIEGMCMAEKVDEAYKFLDEMSNKGYPP), 410–444 (DIVTYNCFLRVLCENRKTDEALKLYGRMVESRCAP), 445–479 (SVQTYNMLISMFFEMDDPDGAFNTWTEMDKRDCVQ), and 480–514 (DVETYCAMINGLFDCHRAKEACFLLEEVVNKGLKL).

The protein belongs to the PPR family. P subfamily.

It is found in the mitochondrion. The polypeptide is Pentatricopeptide repeat-containing protein At1g73400, mitochondrial (Arabidopsis thaliana (Mouse-ear cress)).